Consider the following 130-residue polypeptide: Holo-[acyl-carrier-protein] synthase (130 aa).

Mg(2+) is bound by residues Asp8 and Glu62.

It belongs to the P-Pant transferase superfamily. AcpS family. Mg(2+) serves as cofactor.

The protein localises to the cytoplasm. The catalysed reaction is apo-[ACP] + CoA = holo-[ACP] + adenosine 3',5'-bisphosphate + H(+). In terms of biological role, transfers the 4'-phosphopantetheine moiety from coenzyme A to a Ser of acyl-carrier-protein. The sequence is that of Holo-[acyl-carrier-protein] synthase from Polynucleobacter asymbioticus (strain DSM 18221 / CIP 109841 / QLW-P1DMWA-1) (Polynucleobacter necessarius subsp. asymbioticus).